The primary structure comprises 416 residues: CCA-adding enzyme (416 aa).

Residues Ser42 and Lys45 each coordinate ATP. CTP contacts are provided by Ser42 and Lys45. Residues Asp54, Asp56, and Asp107 each contribute to the Mg(2+) site. Residues His130, Lys150, and Tyr159 each contribute to the ATP site. Positions 130, 150, and 159 each coordinate CTP.

It belongs to the tRNA nucleotidyltransferase/poly(A) polymerase family. Archaeal CCA-adding enzyme subfamily. In terms of assembly, homodimer. Requires Mg(2+) as cofactor.

The catalysed reaction is a tRNA precursor + 2 CTP + ATP = a tRNA with a 3' CCA end + 3 diphosphate. It carries out the reaction a tRNA with a 3' CCA end + 2 CTP + ATP = a tRNA with a 3' CCACCA end + 3 diphosphate. Functionally, catalyzes the addition and repair of the essential 3'-terminal CCA sequence in tRNAs without using a nucleic acid template. Adds these three nucleotides in the order of C, C, and A to the tRNA nucleotide-73, using CTP and ATP as substrates and producing inorganic pyrophosphate. tRNA 3'-terminal CCA addition is required both for tRNA processing and repair. Also involved in tRNA surveillance by mediating tandem CCA addition to generate a CCACCA at the 3' terminus of unstable tRNAs. While stable tRNAs receive only 3'-terminal CCA, unstable tRNAs are marked with CCACCA and rapidly degraded. This Sulfolobus acidocaldarius (strain ATCC 33909 / DSM 639 / JCM 8929 / NBRC 15157 / NCIMB 11770) protein is CCA-adding enzyme.